The following is a 40-amino-acid chain: uncharacterized protein (40 aa).

This is an uncharacterized protein from Acheta domesticus (House cricket).